The following is a 339-amino-acid chain: 5-dehydro-2-deoxygluconokinase (339 aa).

Belongs to the carbohydrate kinase PfkB family.

It carries out the reaction 5-dehydro-2-deoxy-D-gluconate + ATP = 6-phospho-5-dehydro-2-deoxy-D-gluconate + ADP + H(+). The protein operates within polyol metabolism; myo-inositol degradation into acetyl-CoA; acetyl-CoA from myo-inositol: step 5/7. In terms of biological role, catalyzes the phosphorylation of 5-dehydro-2-deoxy-D-gluconate (2-deoxy-5-keto-D-gluconate or DKG) to 6-phospho-5-dehydro-2-deoxy-D-gluconate (DKGP). The sequence is that of 5-dehydro-2-deoxygluconokinase from Clostridium botulinum (strain Eklund 17B / Type B).